A 227-amino-acid chain; its full sequence is Cytidylate kinase (227 aa).

G12 to T20 contacts ATP.

Belongs to the cytidylate kinase family. Type 1 subfamily.

It localises to the cytoplasm. It catalyses the reaction CMP + ATP = CDP + ADP. The catalysed reaction is dCMP + ATP = dCDP + ADP. This chain is Cytidylate kinase, found in Nitrosococcus oceani (strain ATCC 19707 / BCRC 17464 / JCM 30415 / NCIMB 11848 / C-107).